A 101-amino-acid polypeptide reads, in one-letter code: MTSKLAVALLAAFLLSAALCEAAVLSRMSTELRCQCIKTHSTPFHPKFIKELRVIESGPHCENSEIIVKLTNGKEVCLDPKEKWVQKVVQAFLKRAEKQDP.

The N-terminal stretch at 1 to 22 (MTSKLAVALLAAFLLSAALCEA) is a signal peptide. Position 27 is a citrulline (R27). Cystine bridges form between C34–C61 and C36–C77.

This sequence belongs to the intercrine alpha (chemokine CxC) family. As to quaternary structure, homodimer. Interacts with TNFAIP6 (via Link domain); this interaction interferes with chemokine binding to glycosaminoglycans. Post-translationally, citrullination at Arg-27 prevents proteolysis, and dampens tissue inflammation, it also enhances leukocytosis, possibly through impaired chemokine clearance from the blood circulation.

The protein resides in the secreted. Functionally, chemotactic factor that mediates inflammatory response by attracting neutrophils, basophils, and T-cells to clear pathogens and protect the host from infection. Also plays an important role in neutrophil activation. Released in response to an inflammatory stimulus, exerts its effect by binding to the G-protein-coupled receptors CXCR1 and CXCR2, primarily found in neutrophils, monocytes and endothelial cells. G-protein heterotrimer (alpha, beta, gamma subunits) constitutively binds to CXCR1/CXCR2 receptor and activation by IL8 leads to beta and gamma subunits release from Galpha (GNAI2 in neutrophils) and activation of several downstream signaling pathways including PI3K and MAPK pathways. In Ovis aries (Sheep), this protein is Interleukin-8 (CXCL8).